We begin with the raw amino-acid sequence, 116 residues long: Non-specific lipid transfer protein GPI-anchored 17 (116 aa).

The N-terminal stretch at 1–24 (MKIGVVLVLLTVFVVVMSSTSVSA) is a signal peptide. 3 cysteine pairs are disulfide-bonded: cysteine 31–cysteine 74, cysteine 42–cysteine 58, and cysteine 59–cysteine 99. Residue asparagine 107 is the site of GPI-anchor amidated asparagine attachment. The propeptide at 108–116 (GKNFKNTSL) is removed in mature form. Asparagine 113 carries N-linked (GlcNAc...) asparagine glycosylation.

Belongs to the plant LTP family. Expressed in seedlings, preferentially in roots.

The protein resides in the cell membrane. Functionally, probable lipid transfer protein. In Arabidopsis thaliana (Mouse-ear cress), this protein is Non-specific lipid transfer protein GPI-anchored 17.